The primary structure comprises 263 residues: L-aspartate dehydrogenase (263 aa).

Residues Ala-120 and Asn-186 each contribute to the NAD(+) site. The active site involves His-216.

This sequence belongs to the L-aspartate dehydrogenase family.

It carries out the reaction L-aspartate + NADP(+) + H2O = oxaloacetate + NH4(+) + NADPH + H(+). It catalyses the reaction L-aspartate + NAD(+) + H2O = oxaloacetate + NH4(+) + NADH + H(+). Its pathway is cofactor biosynthesis; NAD(+) biosynthesis; iminoaspartate from L-aspartate (dehydrogenase route): step 1/1. Functionally, specifically catalyzes the NAD or NADP-dependent dehydrogenation of L-aspartate to iminoaspartate. This is L-aspartate dehydrogenase from Acinetobacter baumannii (strain AB307-0294).